The primary structure comprises 305 residues: Ribosomal RNA small subunit methyltransferase H (305 aa).

Residues 47–49 (GGH), aspartate 66, phenylalanine 93, aspartate 108, and glutamine 115 each bind S-adenosyl-L-methionine.

This sequence belongs to the methyltransferase superfamily. RsmH family.

The protein resides in the cytoplasm. The catalysed reaction is cytidine(1402) in 16S rRNA + S-adenosyl-L-methionine = N(4)-methylcytidine(1402) in 16S rRNA + S-adenosyl-L-homocysteine + H(+). Functionally, specifically methylates the N4 position of cytidine in position 1402 (C1402) of 16S rRNA. In Prochlorococcus marinus (strain MIT 9211), this protein is Ribosomal RNA small subunit methyltransferase H.